A 215-amino-acid polypeptide reads, in one-letter code: Pyrrolidone-carboxylate peptidase (215 aa).

Residues glutamate 78, cysteine 141, and histidine 165 contribute to the active site.

Belongs to the peptidase C15 family. Homotetramer.

The protein resides in the cytoplasm. It carries out the reaction Release of an N-terminal pyroglutamyl group from a polypeptide, the second amino acid generally not being Pro.. Its function is as follows. Removes 5-oxoproline from various penultimate amino acid residues except L-proline. The sequence is that of Pyrrolidone-carboxylate peptidase from Lactobacillus johnsonii (strain CNCM I-12250 / La1 / NCC 533).